Consider the following 140-residue polypeptide: Hexon-interlacing protein (140 aa).

Positions 100–127 (LTALLAQLDSLTRELNVVSQQLLDLRQQ) form a coiled coil. At Ser135 the chain carries Phosphoserine; by host.

This sequence belongs to the adenoviridae hexon-interlacing protein family. Homotrimer. Interacts with hexon protein; this interaction tethers the hexons together. Self-interacts with adjacent proteins. Interacts with kinesin light chain KLC1; this interaction leads to capsid disruption at the nuclear pore complex during virus entry into host cell.

It localises to the virion. The protein localises to the host nucleus. In terms of biological role, structural component of the virion that forms triskelion structures consisting of three molecules that stabilize three hexon trimers at the center of each icosahedral facet and fixes the peripentonal hexons. Dispensable for assembly. During virus entry, recruits the anterograde motor kinesin-1 to the capsid docked at the nuclear pore complex thereby subjecting the docked capsid to a pulling force. The resulting tension leads to capsid disruption, dispersion of capsid fragments toward cell periphery and eventually viral DNA entry into the host nucleus. This is Hexon-interlacing protein from Human adenovirus C serotype 2 (HAdV-2).